The sequence spans 641 residues: Frizzled-1 (641 aa).

A signal peptide spans Met1–Gly68. Topologically, residues Val69 to Trp316 are extracellular. Residues Ala74 to Gly99 are disordered. The FZ domain occupies Pro106–Gln224. 5 cysteine pairs are disulfide-bonded: Cys111/Cys172, Cys119/Cys165, Cys156/Cys192, Cys182/Cys221, and Cys186/Cys209. A glycan (N-linked (GlcNAc...) asparagine) is linked at Asn125. The N-linked (GlcNAc...) asparagine glycan is linked to Asn225. Residues Ile317–Val337 form a helical membrane-spanning segment. Topologically, residues Asp338–Pro348 are cytoplasmic. The helical transmembrane segment at Ile349–Leu369 threads the bilayer. At Glu370–Cys396 the chain is on the extracellular side. Residues Thr397–Leu417 traverse the membrane as a helical segment. The Cytoplasmic segment spans residues Ser418–Gln439. Residues Tyr440–Gly460 traverse the membrane as a helical segment. At Gln461 to Gly483 the chain is on the extracellular side. Residues Phe484–Phe504 traverse the membrane as a helical segment. The Cytoplasmic portion of the chain corresponds to Val505–Arg530. Residues Ile531 to Tyr551 form a helical membrane-spanning segment. Topologically, residues Glu552–Thr595 are extracellular. A helical transmembrane segment spans residues Val596–Trp616. Residues Ser617–Val641 lie on the Cytoplasmic side of the membrane. The Lys-Thr-X-X-X-Trp motif, mediates interaction with the PDZ domain of Dvl family members signature appears at Lys619–Trp624. The PDZ-binding signature appears at Thr639 to Val641.

Belongs to the G-protein coupled receptor Fz/Smo family. In terms of assembly, interacts with MYOC. Interacts with WNT7B. In terms of processing, ubiquitinated by ZNRF3, leading to its degradation by the proteasome. In terms of tissue distribution, widely expressed. Most abundant in kidney, liver, uterus, ovary and heart. Lower levels seen in brain and intestine. Extremely low in calvaria, mammary glands and testis.

Its subcellular location is the cell membrane. In terms of biological role, receptor for Wnt proteins. Activated by WNT3A, WNT3, WNT1 and to a lesser extent WNT2, but apparently not by WNT4, WNT5A, WNT5B, WNT6 or WNT7A. Contradictory results have been reported for activation by WNT7B. Functions in the canonical Wnt/beta-catenin signaling pathway. The canonical Wnt/beta-catenin signaling pathway leads to the activation of disheveled proteins, inhibition of GSK-3 kinase, nuclear accumulation of beta-catenin and activation of Wnt target genes. A second signaling pathway involving PKC and calcium fluxes has been seen for some family members, but it is not yet clear if it represents a distinct pathway or if it can be integrated in the canonical pathway, as PKC seems to be required for Wnt-mediated inactivation of GSK-3 kinase. Both pathways seem to involve interactions with G-proteins. May be involved in transduction and intercellular transmission of polarity information during tissue morphogenesis and/or in differentiated tissues. The protein is Frizzled-1 (Fzd1) of Rattus norvegicus (Rat).